We begin with the raw amino-acid sequence, 429 residues long: Trigger factor (429 aa).

In terms of domain architecture, PPIase FKBP-type spans 161–246 (GDRLSIDFKG…INEIASPKEL (86 aa)).

This sequence belongs to the FKBP-type PPIase family. Tig subfamily.

It is found in the cytoplasm. The enzyme catalyses [protein]-peptidylproline (omega=180) = [protein]-peptidylproline (omega=0). In terms of biological role, involved in protein export. Acts as a chaperone by maintaining the newly synthesized protein in an open conformation. Functions as a peptidyl-prolyl cis-trans isomerase. This is Trigger factor from Vesicomyosocius okutanii subsp. Calyptogena okutanii (strain HA).